Here is a 380-residue protein sequence, read N- to C-terminus: Cytochrome b (380 aa).

4 consecutive transmembrane segments (helical) span residues 34-54 (FGSL…LLAM), 78-99 (WLIR…YFHI), 114-134 (WNTG…GYVL), and 179-199 (FFAL…IHLT). 2 residues coordinate heme b: H84 and H98. Residues H183 and H197 each coordinate heme b. H202 provides a ligand contact to a ubiquinone. A run of 4 helical transmembrane segments spans residues 227 to 247 (LKDI…ALFS), 289 to 309 (LGGV…PFLH), 321 to 341 (ISQL…WVGS), and 348 to 368 (FIII…VLFP).

It belongs to the cytochrome b family. In terms of assembly, the cytochrome bc1 complex contains 11 subunits: 3 respiratory subunits (MT-CYB, CYC1 and UQCRFS1), 2 core proteins (UQCRC1 and UQCRC2) and 6 low-molecular weight proteins (UQCRH/QCR6, UQCRB/QCR7, UQCRQ/QCR8, UQCR10/QCR9, UQCR11/QCR10 and a cleavage product of UQCRFS1). This cytochrome bc1 complex then forms a dimer. Heme b serves as cofactor.

It localises to the mitochondrion inner membrane. Component of the ubiquinol-cytochrome c reductase complex (complex III or cytochrome b-c1 complex) that is part of the mitochondrial respiratory chain. The b-c1 complex mediates electron transfer from ubiquinol to cytochrome c. Contributes to the generation of a proton gradient across the mitochondrial membrane that is then used for ATP synthesis. The chain is Cytochrome b (MT-CYB) from Pachyptila salvini (Salvin's prion).